A 59-amino-acid chain; its full sequence is Large ribosomal subunit protein bL32c (59 aa).

Positions 1–19 (MAVPKKRTSKAKKNARKAN) are enriched in basic residues. Residues 1-24 (MAVPKKRTSKAKKNARKANWKNQA) form a disordered region.

This sequence belongs to the bacterial ribosomal protein bL32 family.

Its subcellular location is the plastid. The protein resides in the chloroplast. The polypeptide is Large ribosomal subunit protein bL32c (rpl32) (Porphyra purpurea (Red seaweed)).